Here is a 132-residue protein sequence, read N- to C-terminus: Small ribosomal subunit protein uS11 (132 aa).

Belongs to the universal ribosomal protein uS11 family. As to quaternary structure, part of the 30S ribosomal subunit. Interacts with proteins S7 and S18. Binds to IF-3.

Its function is as follows. Located on the platform of the 30S subunit, it bridges several disparate RNA helices of the 16S rRNA. Forms part of the Shine-Dalgarno cleft in the 70S ribosome. The polypeptide is Small ribosomal subunit protein uS11 (Clostridioides difficile (strain 630) (Peptoclostridium difficile)).